We begin with the raw amino-acid sequence, 123 residues long: MIQPQTLLNVADNSGARKLMCIRVIGAAGNQRYARIGDVIIAVIKDAVPQMPLERSEVIRAVIVRTRKEFKGDDGIIIRYDDNAAVIIDQKGNPKGTRVFGAVAEELRELNLTKIVSLAPEVL.

This sequence belongs to the universal ribosomal protein uL14 family. As to quaternary structure, part of the 50S ribosomal subunit. Interacts with IOJAP.

The protein resides in the plastid. The protein localises to the chloroplast. Functionally, binds to 23S rRNA. The polypeptide is Large ribosomal subunit protein uL14c (Zea mays (Maize)).